A 386-amino-acid chain; its full sequence is RNA polymerase sigma factor SigA (386 aa).

Positions 154-224 are sigma-70 factor domain-2; that stretch reads LAEANLRLVV…TRAIADQART (71 aa). The Interaction with polymerase core subunit RpoC motif lies at 178–181; that stretch reads DLIQ. The segment at 233–309 is sigma-70 factor domain-3; sequence ETINKLIRVQ…DDVIESPVDY (77 aa). Residues 322–375 are sigma-70 factor domain-4; sequence VMDTLTDREENVLRMRFGLDDGRMHTLEDVGKQFKVTRERIRQIEAKAIKKLRH. The H-T-H motif DNA-binding region spans 348 to 367; that stretch reads LEDVGKQFKVTRERIRQIEA.

It belongs to the sigma-70 factor family. RpoD/SigA subfamily. As to quaternary structure, interacts transiently with the RNA polymerase catalytic core.

Its subcellular location is the cytoplasm. In terms of biological role, sigma factors are initiation factors that promote the attachment of RNA polymerase to specific initiation sites and are then released. This sigma factor is the primary sigma factor during exponential growth. The polypeptide is RNA polymerase sigma factor SigA (Lactococcus lactis subsp. lactis (strain IL1403) (Streptococcus lactis)).